An 83-amino-acid polypeptide reads, in one-letter code: Mitotic-spindle organizing protein 1 (83 aa).

It belongs to the MOZART1 family. Part of the gamma-tubulin complex.

It localises to the cytoplasm. Its subcellular location is the cytoskeleton. The protein localises to the microtubule organizing center. It is found in the spindle pole body. Required for gamma-tubulin complex recruitment to the microtubule organizing center (MTOC). This chain is Mitotic-spindle organizing protein 1, found in Botryotinia fuckeliana (strain B05.10) (Noble rot fungus).